A 404-amino-acid chain; its full sequence is Cysteine desulfurase IscS (404 aa).

Pyridoxal 5'-phosphate contacts are provided by residues 75–76, N155, Q183, and 203–205; these read AT and SAH. An N6-(pyridoxal phosphate)lysine modification is found at K206. Residue T243 coordinates pyridoxal 5'-phosphate. C328 serves as the catalytic Cysteine persulfide intermediate. C328 is a [2Fe-2S] cluster binding site.

It belongs to the class-V pyridoxal-phosphate-dependent aminotransferase family. NifS/IscS subfamily. Homodimer. Forms a heterotetramer with IscU, interacts with other sulfur acceptors. It depends on pyridoxal 5'-phosphate as a cofactor.

It is found in the cytoplasm. It carries out the reaction (sulfur carrier)-H + L-cysteine = (sulfur carrier)-SH + L-alanine. It functions in the pathway cofactor biosynthesis; iron-sulfur cluster biosynthesis. In terms of biological role, master enzyme that delivers sulfur to a number of partners involved in Fe-S cluster assembly, tRNA modification or cofactor biosynthesis. Catalyzes the removal of elemental sulfur atoms from cysteine to produce alanine. Functions as a sulfur delivery protein for Fe-S cluster synthesis onto IscU, an Fe-S scaffold assembly protein, as well as other S acceptor proteins. This is Cysteine desulfurase IscS from Vibrio atlanticus (strain LGP32) (Vibrio splendidus (strain Mel32)).